Here is a 104-residue protein sequence, read N- to C-terminus: Large ribosomal subunit protein bL21 (104 aa).

This sequence belongs to the bacterial ribosomal protein bL21 family. Part of the 50S ribosomal subunit. Contacts protein L20.

In terms of biological role, this protein binds to 23S rRNA in the presence of protein L20. This chain is Large ribosomal subunit protein bL21, found in Streptococcus pneumoniae serotype 2 (strain D39 / NCTC 7466).